The following is a 107-amino-acid chain: Integration host factor subunit beta (107 aa).

Positions 87 to 107 (RERVNNGTRKNGGSADAASGG) are disordered.

The protein belongs to the bacterial histone-like protein family. In terms of assembly, heterodimer of an alpha and a beta chain.

This protein is one of the two subunits of integration host factor, a specific DNA-binding protein that functions in genetic recombination as well as in transcriptional and translational control. The sequence is that of Integration host factor subunit beta from Granulibacter bethesdensis (strain ATCC BAA-1260 / CGDNIH1).